Here is a 769-residue protein sequence, read N- to C-terminus: Serine protease HtrA-like (769 aa).

Basic residues predominate over residues 1-20; that stretch reads MDIGKKHVIPKSQYRRKRRE. Residues 1-390 form a disordered region; sequence MDIGKKHVIP…ATSKLNKGRA (390 aa). 2 stretches are compositionally biased toward basic and acidic residues: residues 21–64 and 71–108; these read FFHN…ERFK and LEQRNRDVNENKAEESKSNQDSKSAYNRDHYLTDDVSK. Positions 126–137 are enriched in polar residues; that stretch reads YEQNSEATLSTK. A compositionally biased stretch (basic and acidic residues) spans 138–186; the sequence is STDKVESSDMRKLSPDKNKVGHEEQHVLSKPSEHDKETRIDFESSRTDS. Composition is skewed to polar residues over residues 202-221 and 247-262; these read GNESSNLKSEVISDKSNTVP and QQSQNEQTKTYTYGDS. The span at 264–295 shows a compositional bias: basic and acidic residues; sequence QNDKSNHENDLSHHTPSKSDDKDNVMREDHIV. Residues 298 to 308 are compositionally biased toward polar residues; that stretch reads NPDNDINTPSL. Residues 310 to 330 show a composition bias toward basic and acidic residues; it reads KIDDDRKLDEKIHVEDKHKQN. Residues 331-347 show a composition bias toward polar residues; that stretch reads ADSSETVGYQSQSSVSH. Residues 348-362 show a composition bias toward basic and acidic residues; it reads RSTEKRNMAINDHHK. Over residues 366-390 the composition is skewed to polar residues; that stretch reads QKLNTKTSANNNQKKATSKLNKGRA. A helical membrane pass occupies residues 410 to 430; it reads LVILMGIIILIVILNAIFNNV. Catalysis depends on charge relay system residues histidine 504, aspartate 534, and serine 619. One can recognise a PDZ domain in the interval 680–733; sequence IASLNSFERQAVKLPGKVKNGVVVDQVDNNGLADQSSLKKGDVITELDGKLLED.

Belongs to the peptidase S1C family.

Its subcellular location is the cell membrane. This is Serine protease HtrA-like from Staphylococcus aureus (strain bovine RF122 / ET3-1).